Consider the following 358-residue polypeptide: Purine permease 2 (358 aa).

10 helical membrane passes run Val6–Met26, Ile37–Leu57, Phe74–Phe94, Thr110–Val130, Phe134–Leu154, Val170–Val190, Phe209–Gly229, Val262–Phe282, Val288–Phe308, and Phe312–Tyr332. Positions Val46–Leu154 constitute an EamA domain.

The protein belongs to the purine permeases (TC 2.A.7.14) family. As to expression, expressed in the vascular system of leaves. Restricted to the phloem. Expressed in flowers and roots and not detected in stems.

It is found in the membrane. With respect to regulation, competitive inhibition of adenine transport by isopentenyladenine, kinetin, benzylaminopurine, trans- and cis-zeatin and trans-zeatin riboside. In terms of biological role, mediates adenine transport. May be involved in the uptake of cytokinin analogs. The chain is Purine permease 2 (PUP2) from Arabidopsis thaliana (Mouse-ear cress).